We begin with the raw amino-acid sequence, 255 residues long: Adenosylcobinamide-GDP ribazoletransferase (255 aa).

7 helical membrane-spanning segments follow: residues 33 to 53 (IFLP…IELF), 57 to 77 (FPGF…SGAL), 107 to 127 (VGSM…GSYA), 136 to 156 (FTVL…IYSF), 174 to 194 (AGLI…AAFF), 196 to 216 (FSLI…FVVA), and 234 to 254 (IMEL…NIGV).

The protein belongs to the CobS family. Mg(2+) is required as a cofactor.

It is found in the cell membrane. It carries out the reaction alpha-ribazole + adenosylcob(III)inamide-GDP = adenosylcob(III)alamin + GMP + H(+). It catalyses the reaction alpha-ribazole 5'-phosphate + adenosylcob(III)inamide-GDP = adenosylcob(III)alamin 5'-phosphate + GMP + H(+). It participates in cofactor biosynthesis; adenosylcobalamin biosynthesis; adenosylcobalamin from cob(II)yrinate a,c-diamide: step 7/7. Functionally, joins adenosylcobinamide-GDP and alpha-ribazole to generate adenosylcobalamin (Ado-cobalamin). Also synthesizes adenosylcobalamin 5'-phosphate from adenosylcobinamide-GDP and alpha-ribazole 5'-phosphate. This chain is Adenosylcobinamide-GDP ribazoletransferase, found in Carboxydothermus hydrogenoformans (strain ATCC BAA-161 / DSM 6008 / Z-2901).